Consider the following 2241-residue polypeptide: Large tegument protein deneddylase (2241 aa).

Residues Met-1 to Ser-238 form a deubiquitination activity region. Residues Thr-4–Asp-226 form the Peptidase C76 domain. Active-site residues include Cys-24, Asp-160, and His-162. The interval Ala-239 to Ala-314 is disordered. Over residues Asp-240–Pro-250 the composition is skewed to low complexity. The segment covering Ser-251–Val-268 has biased composition (pro residues). Low complexity predominate over residues Pro-304–Ala-314. An interaction with inner tegument protein region spans residues Ser-327–Pro-331. Residues Arg-1170–Ala-1229 form a disordered region. Over residues Thr-1190–Arg-1199 the composition is skewed to basic and acidic residues.

It belongs to the herpesviridae large tegument protein family. Interacts with host CUL1 and CUL4A; these interactions inhibit the E3 ligase activity of cullins. Interacts with inner tegument protein. Interacts with capsid vertex specific component CVC2. Interacts with the major capsid protein/MCP.

Its subcellular location is the virion tegument. The protein resides in the host cytoplasm. The protein localises to the host nucleus. It catalyses the reaction Thiol-dependent hydrolysis of ester, thioester, amide, peptide and isopeptide bonds formed by the C-terminal Gly of ubiquitin (a 76-residue protein attached to proteins as an intracellular targeting signal).. Large tegument protein that plays multiple roles in the viral cycle. During viral entry, remains associated with the capsid while most of the tegument is detached and participates in the capsid transport toward the host nucleus. Plays a role in the routing of the capsid at the nuclear pore complex and subsequent uncoating. Within the host nucleus, acts as a deneddylase and promotes the degradation of nuclear CRLs (cullin-RING ubiquitin ligases) and thereby stabilizes nuclear CRL substrates, while cytoplasmic CRLs remain unaffected. These modifications prevent host cell cycle S-phase progression and create a favorable environment allowing efficient viral genome replication. Participates later in the secondary envelopment of capsids. Indeed, plays a linker role for the association of the outer viral tegument to the capsids together with the inner tegument protein. The protein is Large tegument protein deneddylase (UL48) of Human cytomegalovirus (strain AD169) (HHV-5).